The primary structure comprises 460 residues: MSHQGKIVQCIGAVIDVEFTPGEIPKVYDALVMEGSELTLEVQQQLGDGVVRTIALGSSDGLRRGMMVTNTQKQISVPVGTKTLGRIMDVLGRPIDEMGEIGANSLMPIHRAAPAFDELSASTELLETGIKVIDLVCPFAKGGKIGLFGGAGVGKTVNMMELIRNIAIEHSGYSVFAGVGERTREGNDFYHEMKDSNVLDKVALVYGQMNEPPGNRLRVALTGLTMAEAFRDEGRDVLFFVDNIYRYTLAGTEVSALLGRMPSAVGYQPTLAEEMGRLQERITSSKTGSITSIQAVYVPADDLTDPSPATTFGHLDATVVLSRDIASLGIYPAVDPLDSTSRQLDPLIIGEDHYNTAREVQQTLQRYKELRDIIAILGMDELSPEDKLSVSRARKIQRFLSQPFFVAEVFTGSPGKYVPLKETIKGFKGIVSGEYDDIPEQAFYMVGGIEEVLEKAKSIQ.

149 to 156 provides a ligand contact to ATP; sequence GGAGVGKT.

Belongs to the ATPase alpha/beta chains family. As to quaternary structure, F-type ATPases have 2 components, CF(1) - the catalytic core - and CF(0) - the membrane proton channel. CF(1) has five subunits: alpha(3), beta(3), gamma(1), delta(1), epsilon(1). CF(0) has three main subunits: a(1), b(2) and c(9-12). The alpha and beta chains form an alternating ring which encloses part of the gamma chain. CF(1) is attached to CF(0) by a central stalk formed by the gamma and epsilon chains, while a peripheral stalk is formed by the delta and b chains.

The protein resides in the cell inner membrane. It carries out the reaction ATP + H2O + 4 H(+)(in) = ADP + phosphate + 5 H(+)(out). Its function is as follows. Produces ATP from ADP in the presence of a proton gradient across the membrane. The catalytic sites are hosted primarily by the beta subunits. The protein is ATP synthase subunit beta of Nitrosomonas europaea (strain ATCC 19718 / CIP 103999 / KCTC 2705 / NBRC 14298).